The chain runs to 313 residues: 4-hydroxy-3-methylbut-2-enyl diphosphate reductase (313 aa).

Cysteine 12 is a [4Fe-4S] cluster binding site. (2E)-4-hydroxy-3-methylbut-2-enyl diphosphate is bound by residues histidine 41 and histidine 74. Residues histidine 41 and histidine 74 each contribute to the dimethylallyl diphosphate site. 2 residues coordinate isopentenyl diphosphate: histidine 41 and histidine 74. Cysteine 96 is a [4Fe-4S] cluster binding site. Histidine 124 lines the (2E)-4-hydroxy-3-methylbut-2-enyl diphosphate pocket. Histidine 124 contributes to the dimethylallyl diphosphate binding site. Position 124 (histidine 124) interacts with isopentenyl diphosphate. Glutamate 126 (proton donor) is an active-site residue. Residue threonine 167 coordinates (2E)-4-hydroxy-3-methylbut-2-enyl diphosphate. Cysteine 197 provides a ligand contact to [4Fe-4S] cluster. 4 residues coordinate (2E)-4-hydroxy-3-methylbut-2-enyl diphosphate: serine 225, serine 226, asparagine 227, and serine 269. Dimethylallyl diphosphate-binding residues include serine 225, serine 226, asparagine 227, and serine 269. Residues serine 225, serine 226, asparagine 227, and serine 269 each contribute to the isopentenyl diphosphate site.

Belongs to the IspH family. As to quaternary structure, homodimer. Requires [4Fe-4S] cluster as cofactor.

It carries out the reaction isopentenyl diphosphate + 2 oxidized [2Fe-2S]-[ferredoxin] + H2O = (2E)-4-hydroxy-3-methylbut-2-enyl diphosphate + 2 reduced [2Fe-2S]-[ferredoxin] + 2 H(+). The catalysed reaction is dimethylallyl diphosphate + 2 oxidized [2Fe-2S]-[ferredoxin] + H2O = (2E)-4-hydroxy-3-methylbut-2-enyl diphosphate + 2 reduced [2Fe-2S]-[ferredoxin] + 2 H(+). It participates in isoprenoid biosynthesis; dimethylallyl diphosphate biosynthesis; dimethylallyl diphosphate from (2E)-4-hydroxy-3-methylbutenyl diphosphate: step 1/1. Its pathway is isoprenoid biosynthesis; isopentenyl diphosphate biosynthesis via DXP pathway; isopentenyl diphosphate from 1-deoxy-D-xylulose 5-phosphate: step 6/6. Catalyzes the conversion of 1-hydroxy-2-methyl-2-(E)-butenyl 4-diphosphate (HMBPP) into a mixture of isopentenyl diphosphate (IPP) and dimethylallyl diphosphate (DMAPP). Acts in the terminal step of the DOXP/MEP pathway for isoprenoid precursor biosynthesis. The chain is 4-hydroxy-3-methylbut-2-enyl diphosphate reductase from Buchnera aphidicola subsp. Schizaphis graminum (strain Sg).